Here is a 243-residue protein sequence, read N- to C-terminus: UPF0280 protein Memar_1519 (243 aa).

The protein belongs to the UPF0280 family.

The polypeptide is UPF0280 protein Memar_1519 (Methanoculleus marisnigri (strain ATCC 35101 / DSM 1498 / JR1)).